We begin with the raw amino-acid sequence, 655 residues long: Putative esterase (655 aa).

Residues 9–29 (VLSLTLIYISISIGFSVYFYV) traverse the membrane as a helical segment. N-linked (GlcNAc...) asparagine; by host glycosylation is found at asparagine 71, asparagine 89, asparagine 101, asparagine 185, asparagine 386, asparagine 449, and asparagine 512. Histidine 515 (charge relay system) is an active-site residue. N-linked (GlcNAc...) asparagine; by host glycans are attached at residues asparagine 527 and asparagine 597.

The protein belongs to the type-B carboxylesterase/lipase family.

It is found in the membrane. It carries out the reaction a carboxylic ester + H2O = an alcohol + a carboxylate + H(+). This Noctuidae (owlet moths) protein is Putative esterase.